Reading from the N-terminus, the 856-residue chain is MGSLFRSETMCLAQLFLQSGTAYECLSALGEKGLVQFRDLNQNVSSFQRKFVGEVKRCEELERILVYLVQEINRADIPLPEGEASPPAPPLKQVLEMQEQLQKLEVELREVTKNKEKLRKNLLELIEYTHMLRVTKTFVKRNVEFEPTYEEFPSLESDSLLDYSCMQRLGAKLGFVSGLINQGKVEAFEKMLWRVCKGYTIVSYAELDESLEDPETGEVIKWYVFLISFWGEQIGHKVKKICDCYHCHVYPYPNTAEERREIQEGLNTRIQDLYTVLHKTEDYLRQVLCKAAESVYSRVIQVKKMKAIYHMLNMCSFDVTNKCLIAEVWCPEADLQDLRRALEEGSRESGATIPSFMNIIPTKETPPTRIRTNKFTEGFQNIVDAYGVGSYREVNPALFTIITFPFLFAVMFGDFGHGFVMFLFALLLVLNENHPRLNQSQEIMRMFFNGRYILLLMGLFSVYTGLIYNDCFSKSVNLFGSGWNVSAMYSSSHPPAEHKKMVLWNDSVVRHNSILQLDPSIPGVFRGPYPLGIDPIWNLATNRLTFLNSFKMKMSVILGIIHMTFGVILGIFNHLHFRKKFNIYLVSIPELLFMLCIFGYLIFMIFYKWLVFSAETSRVAPSILIEFINMFLFPASKTSGLYTGQEYVQRVLLVVTALSVPVLFLGKPLFLLWLHNGRSCFGVNRSGYTLIRKDSEEEVSLLGSQDIEEGNHQVEDGCREMACEEFNFGEILMTQVIHSIEYCLGCISNTASYLRLWALSLAHAQLSDVLWAMLMRVGLRVDTTYGVLLLLPVIALFAVLTIFILLIMEGLSAFLHAIRLHWVEFQNKFYVGAGTKFVPFSFSLLSSKFNNDDSVA.

Over 1–393 (MGSLFRSETM…DAYGVGSYRE (393 aa)) the chain is Cytoplasmic. A helical transmembrane segment spans residues 394-412 (VNPALFTIITFPFLFAVMF). Residues 413 to 414 (GD) are Vacuolar-facing. Residues 415–431 (FGHGFVMFLFALLLVLN) traverse the membrane as a helical segment. The Cytoplasmic portion of the chain corresponds to 432 to 445 (ENHPRLNQSQEIMR). A helical membrane pass occupies residues 446–475 (MFFNGRYILLLMGLFSVYTGLIYNDCFSKS). The Vacuolar segment spans residues 476–549 (VNLFGSGWNV…ATNRLTFLNS (74 aa)). Asn-484 and Asn-505 each carry an N-linked (GlcNAc...) asparagine glycan. The helical transmembrane segment at 550 to 569 (FKMKMSVILGIIHMTFGVIL) threads the bilayer. The Cytoplasmic segment spans residues 570–587 (GIFNHLHFRKKFNIYLVS). A helical transmembrane segment spans residues 588-608 (IPELLFMLCIFGYLIFMIFYK). The Vacuolar segment spans residues 609-651 (WLVFSAETSRVAPSILIEFINMFLFPASKTSGLYTGQEYVQRV). The helical transmembrane segment at 652 to 671 (LLVVTALSVPVLFLGKPLFL) threads the bilayer. At 672–739 (LWLHNGRSCF…EILMTQVIHS (68 aa)) the chain is on the cytoplasmic side. 2 positions are modified to phosphoserine: Ser-695 and Ser-700. Residues 740–764 (IEYCLGCISNTASYLRLWALSLAHA) form a helical membrane-spanning segment. The Vacuolar segment spans residues 765-785 (QLSDVLWAMLMRVGLRVDTTY). Residues 786-824 (GVLLLLPVIALFAVLTIFILLIMEGLSAFLHAIRLHWVE) traverse the membrane as a helical segment. The Cytoplasmic portion of the chain corresponds to 825–856 (FQNKFYVGAGTKFVPFSFSLLSSKFNNDDSVA).

This sequence belongs to the V-ATPase 116 kDa subunit family. As to quaternary structure, V-ATPase is a heteromultimeric enzyme made up of two complexes: the ATP-hydrolytic V1 complex and the proton translocation V0 complex. The V1 complex consists of three catalytic AB heterodimers that form a heterohexamer, three peripheral stalks each consisting of EG heterodimers, one central rotor including subunits D and F, and the regulatory subunits C and H. The proton translocation complex V0 consists of the proton transport subunit a, a ring of proteolipid subunits c9c'', rotary subunit d, subunits e and f, and the accessory subunits ATP6AP1/Ac45 and ATP6AP2/PRR. Directly interacts with PSCD2 through its N-terminal cytosolic tail in an intra-endosomal acidification-dependent manner. Disruption of this interaction results in the inhibition of endocytosis. Interacts with SPAAR.

The protein resides in the cell membrane. Its subcellular location is the endosome membrane. Subunit of the V0 complex of vacuolar(H+)-ATPase (V-ATPase), a multisubunit enzyme composed of a peripheral complex (V1) that hydrolyzes ATP and a membrane integral complex (V0) that translocates protons. V-ATPase is responsible for acidifying and maintaining the pH of intracellular compartments and in some cell types, is targeted to the plasma membrane, where it is responsible for acidifying the extracellular environment. Essential component of the endosomal pH-sensing machinery. May play a role in maintaining the Golgi functions, such as glycosylation maturation, by controlling the Golgi pH. In aerobic conditions, involved in intracellular iron homeostasis, thus triggering the activity of Fe(2+) prolyl hydroxylase (PHD) enzymes, and leading to HIF1A hydroxylation and subsequent proteasomal degradation. This Homo sapiens (Human) protein is V-type proton ATPase 116 kDa subunit a 2 (ATP6V0A2).